Here is a 397-residue protein sequence, read N- to C-terminus: Myb family transcription factor PHL4 (397 aa).

The disordered stretch occupies residues 1-27 (MIPNDDDDANSMKNYPLNDDDANSMKN). The HTH myb-type domain maps to 228 to 288 (AAAKGRMRWT…HLQKYRTAKY (61 aa)). The H-T-H motif DNA-binding region spans 259 to 284 (PKGVLKHMKVEGLTIFHVKSHLQKYR). A coiled coil region spans residues 319–339 (TETLRIQMEHQKKLHEQLESL). An LHEQLE motif is present at residues 332–337 (LHEQLE). A disordered region spans residues 359–397 (KQNMGFGGPEQGEKTSAKTPENGSEESESPRPKRPRNEE). Basic and acidic residues predominate over residues 386-397 (ESPRPKRPRNEE). S387 is modified (phosphoserine).

The protein belongs to the MYB-CC family.

It localises to the nucleus. Transcription factor involved in male gametophyte development. The chain is Myb family transcription factor PHL4 from Arabidopsis thaliana (Mouse-ear cress).